The chain runs to 268 residues: MTDNILFAFALTLFAGLSTGVGSLIGLLSKEFNPKVLTISLGFSAGVMIYVAMIEIMVKARESLVVGIGAEMGKVVTVLSFFAGIFLIALIDKLIPSYENPHELNVAQKLEECSENQKKKLMRMGLFSAVAIGIHNFPEGLATFMSGLSNPTLGVSIAVAIAIHNIPEGLAVSAPIFYATQSRKKAFILSFLSGLAEPVGALIGYFLLRSFFSPSLFGVVFGAVAGIMVYISLDELLPAAEEYGEHHFAIGGVIAGMVVMAISLLLFT.

A run of 8 helical transmembrane segments spans residues 5-25 (ILFA…GSLI), 36-56 (VLTI…MIEI), 75-95 (VVTV…DKLI), 124-144 (MGLF…LATF), 157-177 (IAVA…APIF), 187-207 (FILS…GYFL), 211-231 (FFSP…MVYI), and 248-268 (FAIG…LLFT). Fe(2+) contacts are provided by Asn-136 and Glu-139. Zn(2+)-binding residues include Glu-139 and His-164. Fe(2+) is bound by residues Asn-165, Glu-168, and Glu-197. Residue Glu-168 participates in Zn(2+) binding.

Belongs to the ZIP transporter (TC 2.A.5) family. ZupT subfamily.

The protein resides in the cell membrane. The enzyme catalyses Zn(2+)(in) = Zn(2+)(out). Its function is as follows. Mediates zinc uptake. May also transport other divalent cations. The chain is Zinc transporter ZupT from Chlorobium chlorochromatii (strain CaD3).